The sequence spans 241 residues: Peptidoglycan endopeptidase RipB (241 aa).

The signal sequence occupies residues 1 to 31; that stretch reads MRHTRFHPIKLAWITAVVAGLMVGVATPADA. Positions 109–241 constitute a NlpC/P60 domain; sequence RQAVEYVIRR…TPFVTRIIEY (133 aa). Cys-152 acts as the Nucleophile in catalysis. Catalysis depends on His-201, which acts as the Proton acceptor. Glu-213 is an active-site residue.

This sequence belongs to the peptidase C40 family. Monomer.

Its function is as follows. Peptidoglycan endopeptidase that cleaves the bond between D-glutamate and meso-diaminopimelate. Binds high-molecular weight peptidoglycan, but does not degrade it. Required for normal separation of daughter cells after cell division and cell wall integrity. Required for host cell invasion. This chain is Peptidoglycan endopeptidase RipB (ripB), found in Mycobacterium tuberculosis (strain CDC 1551 / Oshkosh).